The primary structure comprises 291 residues: Urease accessory protein UreD (291 aa).

It belongs to the UreD family. In terms of assembly, ureD, UreF and UreG form a complex that acts as a GTP-hydrolysis-dependent molecular chaperone, activating the urease apoprotein by helping to assemble the nickel containing metallocenter of UreC. The UreE protein probably delivers the nickel.

The protein localises to the cytoplasm. In terms of biological role, required for maturation of urease via the functional incorporation of the urease nickel metallocenter. This is Urease accessory protein UreD from Acinetobacter baumannii (strain ACICU).